A 283-amino-acid chain; its full sequence is Pantothenate synthetase (283 aa).

30 to 37 (MGNLHAGH) serves as a coordination point for ATP. The active-site Proton donor is His-37. Residue Gln-61 participates in (R)-pantoate binding. Position 61 (Gln-61) interacts with beta-alanine. 149 to 152 (GEKD) serves as a coordination point for ATP. Gln-155 contacts (R)-pantoate. ATP is bound by residues Val-178 and 186 to 189 (LSSR).

Belongs to the pantothenate synthetase family. As to quaternary structure, homodimer.

The protein localises to the cytoplasm. The enzyme catalyses (R)-pantoate + beta-alanine + ATP = (R)-pantothenate + AMP + diphosphate + H(+). The protein operates within cofactor biosynthesis; (R)-pantothenate biosynthesis; (R)-pantothenate from (R)-pantoate and beta-alanine: step 1/1. Catalyzes the condensation of pantoate with beta-alanine in an ATP-dependent reaction via a pantoyl-adenylate intermediate. This chain is Pantothenate synthetase, found in Pseudomonas aeruginosa (strain UCBPP-PA14).